The chain runs to 181 residues: Der GTPase-activating protein YihI (181 aa).

A disordered region spans residues 1-73; it reads MSRIKKARKP…DPRIGSKKPI (73 aa). Positions 22 to 32 are enriched in basic and acidic residues; it reads NRTDRDVESRE. Basic residues predominate over residues 33–42; sequence IKRKRKRKGL. Residues 55–67 show a composition bias toward basic and acidic residues; sequence QARRNAQKKDPRI.

Belongs to the YihI family. Interacts with Der.

In terms of biological role, a GTPase-activating protein (GAP) that modifies Der/EngA GTPase function. May play a role in ribosome biogenesis. The polypeptide is Der GTPase-activating protein YihI (Aliivibrio fischeri (strain ATCC 700601 / ES114) (Vibrio fischeri)).